The primary structure comprises 427 residues: Heterogeneous nuclear ribonucleoprotein K (427 aa).

The disordered stretch occupies residues 1 to 34 (METEQQEETFTNTETNGKRPAEDMEEEQAFKRSR). The segment covering 16–34 (NGKRPAEDMEEEQAFKRSR) has biased composition (basic and acidic residues). KH domains follow at residues 39–101 (MVEL…LKKI) and 117–182 (DCEL…IKII). A run of 2 repeats spans residues 51–73 (AGAV…NASV) and 56–59 (GKGG). Residues 51-385 (AGAVIGKGGK…QIRHESGASI (335 aa)) are 2 X 22 AA approximate repeats. Positions 56–371 (GKGGKNIKAL…LAGSIIGKGG (316 aa)) are 5 X 4 AA repeats of G-X-G-G. Residues 209–246 (YGGFTMMFDDRRGRPVGFPMRGRGGFDRMPPNRGGRPM) are RNA-binding RGG-box. 3 tandem repeats follow at residues 218–223 (DRRGRP), 230–233 (GRGG), and 240–243 (NRGG). Residues 218–302 (DRRGRPVGFP…LMSYDRRGRP (85 aa)) are 2 X 6 AA approximate repeats. Positions 221–305 (GRPVGFPMRG…YDRRGRPGDR (85 aa)) are disordered. The span at 249 to 258 (SRRDYDDMSP) shows a compositional bias: basic and acidic residues. 4 tandem repeats follow at residues 268–271 (GRGG), 297–302 (DRRGRP), 363–385 (AGSI…GASI), and 368–371 (GKGG). Residues 295-305 (SYDRRGRPGDR) show a composition bias toward basic and acidic residues. The 65-residue stretch at 351–415 (IITTQVTIPK…DQIQNAQYLL (65 aa)) folds into the KH 3 domain.

The protein localises to the cytoplasm. It localises to the nucleus. The protein resides in the nucleoplasm. One of the major pre-mRNA-binding proteins. Binds tenaciously to poly(C) sequences. Likely to play a role in the nuclear metabolism of hnRNAs, particularly for pre-mRNAs that contain cytidine-rich sequences. Can also bind poly(C) single-stranded DNA. May play an important role in p53/TP53 response to DNA damage, acting at the level of both transcription activation and repression. As part of a ribonucleoprotein complex, may negatively regulate the transcription of genes involved in neuronal differentiation. This chain is Heterogeneous nuclear ribonucleoprotein K (HNRNPK), found in Gallus gallus (Chicken).